A 204-amino-acid chain; its full sequence is Abscisic acid receptor PYL3 (204 aa).

The tract at residues 40–191 (HEPRDHQCSS…NLKSLAEVSE (152 aa)) is START-like. A disulfide bridge connects residues C47 and C172. Abscisate contacts are provided by residues K76, 104 to 109 (ATRSTE), 131 to 137 (RLKNYSS), and E156. The Gate loop signature appears at 100–104 (SGLPA). The Latch loop signature appears at 130 to 132 (HRL).

Belongs to the PYR/PYL/RCAR abscisic acid intracellular receptor family. As to quaternary structure, monomer. Interacts with PP2C50. Binding to PP2C50 is dependent on the presence of abscisic acid (ABA). Interacts with PP2C30 and PP2C53.

The protein localises to the cytoplasm. The protein resides in the cytosol. It is found in the nucleus. Its function is as follows. Involved in abscisic acid (ABA) signaling during seed germination and abiotic stress response. Acts as a positive regulator of ABA-mediated inhibition of seed germination, and tolerance to drought and cold stresses. Together with PP2C50 and SAPK10, may form an ABA signaling module involved in stress response. Inhibits the protein phosphatases PP2C06 and PP2C09 when activated by abscisic acid (ABA). This is Abscisic acid receptor PYL3 from Oryza sativa subsp. japonica (Rice).